Consider the following 546-residue polypeptide: Chaperonin GroEL 2 (546 aa).

ATP-binding positions include 30–33 (TLGP), lysine 51, 87–91 (DGTTT), glycine 415, and aspartate 495. Positions 527–546 (DAAPATAPGGPGAGGPGFDF) are disordered. Over residues 535 to 546 (GGPGAGGPGFDF) the composition is skewed to gly residues.

Belongs to the chaperonin (HSP60) family. Forms a cylinder of 14 subunits composed of two heptameric rings stacked back-to-back. Interacts with the co-chaperonin GroES.

It is found in the cytoplasm. The enzyme catalyses ATP + H2O + a folded polypeptide = ADP + phosphate + an unfolded polypeptide.. Functionally, together with its co-chaperonin GroES, plays an essential role in assisting protein folding. The GroEL-GroES system forms a nano-cage that allows encapsulation of the non-native substrate proteins and provides a physical environment optimized to promote and accelerate protein folding. The chain is Chaperonin GroEL 2 from Burkholderia ambifaria (strain ATCC BAA-244 / DSM 16087 / CCUG 44356 / LMG 19182 / AMMD) (Burkholderia cepacia (strain AMMD)).